We begin with the raw amino-acid sequence, 224 residues long: Peptide deformylase 3 (224 aa).

Positions 135 and 177 each coordinate Fe cation. The active site involves Glu178. His181 provides a ligand contact to Fe cation.

The protein belongs to the polypeptide deformylase family. It depends on Fe(2+) as a cofactor.

It carries out the reaction N-terminal N-formyl-L-methionyl-[peptide] + H2O = N-terminal L-methionyl-[peptide] + formate. Functionally, removes the formyl group from the N-terminal Met of newly synthesized proteins. Requires at least a dipeptide for an efficient rate of reaction. N-terminal L-methionine is a prerequisite for activity but the enzyme has broad specificity at other positions. This is Peptide deformylase 3 from Streptomyces avermitilis (strain ATCC 31267 / DSM 46492 / JCM 5070 / NBRC 14893 / NCIMB 12804 / NRRL 8165 / MA-4680).